Here is a 138-residue protein sequence, read N- to C-terminus: Protein Rrf1 (138 aa).

The Response regulatory domain maps to 4–116; the sequence is RILVVQEDPD…LLLALVDRAL (113 aa). Asp-13 and Asp-53 each carry 4-aspartylphosphate.

Functionally, may be involved in regulation of gene transcription. Belongs to the family of response regulators, and members of this family involved in the regulation of gene transcription are two-domain proteins. This protein contains only the N-terminal phosphorylation domain and not the C-terminal DNA-binding domain but it may bind to Rrf2 protein and the latter may bind to DNA. The sequence is that of Protein Rrf1 (rrf1) from Nitratidesulfovibrio vulgaris (strain ATCC 29579 / DSM 644 / CCUG 34227 / NCIMB 8303 / VKM B-1760 / Hildenborough) (Desulfovibrio vulgaris).